The following is a 1399-amino-acid chain: DNA-directed RNA polymerase subunit beta' (1399 aa).

Positions 70, 72, 85, and 88 each coordinate Zn(2+). Asp460, Asp462, and Asp464 together coordinate Mg(2+). Zn(2+)-binding residues include Cys814, Cys888, Cys895, and Cys898.

This sequence belongs to the RNA polymerase beta' chain family. As to quaternary structure, the RNAP catalytic core consists of 2 alpha, 1 beta, 1 beta' and 1 omega subunit. When a sigma factor is associated with the core the holoenzyme is formed, which can initiate transcription. Requires Mg(2+) as cofactor. Zn(2+) is required as a cofactor.

The catalysed reaction is RNA(n) + a ribonucleoside 5'-triphosphate = RNA(n+1) + diphosphate. Functionally, DNA-dependent RNA polymerase catalyzes the transcription of DNA into RNA using the four ribonucleoside triphosphates as substrates. This Pseudomonas fluorescens (strain SBW25) protein is DNA-directed RNA polymerase subunit beta'.